A 172-amino-acid polypeptide reads, in one-letter code: Small ribosomal subunit protein uS5 (172 aa).

An S5 DRBM domain is found at 17-80 (LREKMISVNR…EQARRNMFKV (64 aa)).

This sequence belongs to the universal ribosomal protein uS5 family. As to quaternary structure, part of the 30S ribosomal subunit. Contacts proteins S4 and S8.

Functionally, with S4 and S12 plays an important role in translational accuracy. In terms of biological role, located at the back of the 30S subunit body where it stabilizes the conformation of the head with respect to the body. In Paraburkholderia xenovorans (strain LB400), this protein is Small ribosomal subunit protein uS5.